A 92-amino-acid chain; its full sequence is Small ribosomal subunit protein uS19 (92 aa).

It belongs to the universal ribosomal protein uS19 family.

Protein S19 forms a complex with S13 that binds strongly to the 16S ribosomal RNA. The protein is Small ribosomal subunit protein uS19 of Hyphomonas neptunium (strain ATCC 15444).